A 406-amino-acid polypeptide reads, in one-letter code: Peptidase T (406 aa).

Residue histidine 80 participates in Zn(2+) binding. Residue aspartate 82 is part of the active site. Aspartate 141 contacts Zn(2+). The Proton acceptor role is filled by glutamate 175. The Zn(2+) site is built by glutamate 176, aspartate 198, and histidine 380.

It belongs to the peptidase M20B family. Zn(2+) serves as cofactor.

It localises to the cytoplasm. It catalyses the reaction Release of the N-terminal residue from a tripeptide.. Functionally, cleaves the N-terminal amino acid of tripeptides. This is Peptidase T from Streptococcus mutans serotype c (strain ATCC 700610 / UA159).